The following is an 835-amino-acid chain: Leucine--tRNA ligase (835 aa).

The 'HIGH' region signature appears at 41-52 (PYPSGQGLHVGH). Positions 611-615 (KMSKS) match the 'KMSKS' region motif. Lysine 614 is a binding site for ATP.

The protein belongs to the class-I aminoacyl-tRNA synthetase family.

The protein resides in the cytoplasm. The enzyme catalyses tRNA(Leu) + L-leucine + ATP = L-leucyl-tRNA(Leu) + AMP + diphosphate. This chain is Leucine--tRNA ligase, found in Elusimicrobium minutum (strain Pei191).